The sequence spans 80 residues: Acyl carrier protein (80 aa).

Positions 1-79 (MSQEEILQKV…DAVKFIEAKK (79 aa)) constitute a Carrier domain. S39 is subject to O-(pantetheine 4'-phosphoryl)serine.

Belongs to the acyl carrier protein (ACP) family. 4'-phosphopantetheine is transferred from CoA to a specific serine of apo-ACP by AcpS. This modification is essential for activity because fatty acids are bound in thioester linkage to the sulfhydryl of the prosthetic group.

The protein localises to the cytoplasm. It participates in lipid metabolism; fatty acid biosynthesis. In terms of biological role, carrier of the growing fatty acid chain in fatty acid biosynthesis. This chain is Acyl carrier protein, found in Prochlorococcus marinus (strain MIT 9515).